Here is a 302-residue protein sequence, read N- to C-terminus: RuBisCO operon transcriptional regulator (302 aa).

The HTH lysR-type domain maps to 1-60 (MHVSLRQLRVFEAVARHNSYTRAAEELHLSQPAVSMQVRQLEDEIGLSLFERLGKQVVLT). The H-T-H motif DNA-binding region spans 20–39 (YTRAAEELHLSQPAVSMQVR).

Belongs to the LysR transcriptional regulatory family.

In terms of biological role, trans-acting transcriptional regulator of RuBisCO genes (rbcAB) expression. The chain is RuBisCO operon transcriptional regulator (rbcR) from Allochromatium vinosum (Chromatium vinosum).